The following is a 220-amino-acid chain: N-(5'-phosphoribosyl)anthranilate isomerase (220 aa).

It belongs to the TrpF family.

It carries out the reaction N-(5-phospho-beta-D-ribosyl)anthranilate = 1-(2-carboxyphenylamino)-1-deoxy-D-ribulose 5-phosphate. It functions in the pathway amino-acid biosynthesis; L-tryptophan biosynthesis; L-tryptophan from chorismate: step 3/5. The protein is N-(5'-phosphoribosyl)anthranilate isomerase of Xylella fastidiosa (strain 9a5c).